The sequence spans 346 residues: KH domain-containing, RNA-binding, signal transduction-associated protein 3 (346 aa).

Positions 1-160 (MEEKYLPELM…IKKFLIPDYN (160 aa)) are involved in homodimerization. A Glycyl lysine isopeptide (Lys-Gly) (interchain with G-Cter in SUMO2) cross-link involves residue Lys4. One can recognise a KH domain in the interval 61-127 (LIPVKQFPKF…AKYFHLNDDL (67 aa)). The interaction with SIAH1 stretch occupies residues 212-251 (RPVGVVVPRGTPTPRGVLSTRGPVSRGRGLLTPRARGVPP). A compositionally biased stretch (low complexity) spans 213–228 (PVGVVVPRGTPTPRGV). 2 disordered regions span residues 213–267 (PVGV…ETYG) and 318–346 (QEEW…YGRY). Over residues 253-262 (GYRPPPPPPT) the composition is skewed to pro residues.

It belongs to the KHDRBS family. In terms of assembly, self-associates to form homooligomers; dimerization increases RNA affinity. Interacts with KHDRBS2/SLM-1. Interacts with KHDRBS1/SAM68; heterooligomer formation of KHDRBS family proteins may modulate RNA substrate specificity. Interacts with the splicing regulatory proteins SFRS9, SAFB and YTHDC1. Interacts with HNRPL. Interacts with RBMX, RBMY1A1, p85 subunit of PI3-kinase, SERPINB5. Interacts with SIAH1 which promotes targeting for degradation. Phosphorylated on tyrosine residues. Isoform 1 C-terminal region is tyrosine-rich, but isoform 2 lacking this C-terminal region is also tyrosine-phosphorylated. Ubiquitous with higher expression in testis, skeletal muscle and brain. Expressed in the kidney only in podocytes, the glomerular epithelial cells of the kidney. Strongly expressed after meiosis.

Its subcellular location is the nucleus. Functionally, RNA-binding protein that plays a role in the regulation of alternative splicing and influences mRNA splice site selection and exon inclusion. Binds preferentially to the 5'-[AU]UAAA-3' motif in vitro. Binds optimally to RNA containing 5'-[AU]UAA-3' as a bipartite motif spaced by more than 15 nucleotides. Binds poly(A). RNA-binding abilities are down-regulated by tyrosine kinase PTK6. Involved in splice site selection of vascular endothelial growth factor. In vitro regulates CD44 alternative splicing by direct binding to purine-rich exonic enhancer. Can regulate alternative splicing of neurexins NRXN1-3 in the laminin G-like domain 6 containing the evolutionary conserved neurexin alternative spliced segment 4 (AS4) involved in neurexin selective targeting to postsynaptic partners such as neuroligins and LRRTM family members. Targeted, cell-type specific splicing regulation of NRXN1 at AS4 is involved in neuronal glutamatergic synapse function and plasticity. May regulate expression of KHDRBS2/SLIM-1 in defined brain neuron populations by modifying its alternative splicing. Can bind FABP9 mRNA. May play a role as a negative regulator of cell growth. Inhibits cell proliferation. Its function is as follows. (Microbial infection) Involved in post-transcriptional regulation of HIV-1 gene expression. This chain is KH domain-containing, RNA-binding, signal transduction-associated protein 3 (KHDRBS3), found in Homo sapiens (Human).